Consider the following 454-residue polypeptide: Diaminobutyrate--2-oxoglutarate aminotransferase (454 aa).

Lys-287 bears the N6-(pyridoxal phosphate)lysine mark.

It belongs to the class-III pyridoxal-phosphate-dependent aminotransferase family. It depends on pyridoxal 5'-phosphate as a cofactor.

It carries out the reaction L-2,4-diaminobutanoate + 2-oxoglutarate = L-aspartate 4-semialdehyde + L-glutamate. It functions in the pathway amine and polyamine biosynthesis; 1,3-diaminopropane biosynthesis; 1,3-diaminopropane from L-aspartate 4-semialdehyde: step 1/2. This is Diaminobutyrate--2-oxoglutarate aminotransferase (dat) from Haemophilus influenzae (strain ATCC 51907 / DSM 11121 / KW20 / Rd).